The chain runs to 146 residues: Catabolic 3-dehydroquinase (146 aa).

Y24 acts as the Proton acceptor in catalysis. The substrate site is built by N78, H84, and D91. H104 serves as the catalytic Proton donor. Substrate-binding positions include 105 to 106 (IT) and R115.

It belongs to the type-II 3-dehydroquinase family. As to quaternary structure, homododecamer. Adopts a ring-like structure, composed of an arrangement of two hexameric rings stacked on top of one another.

It carries out the reaction 3-dehydroquinate = 3-dehydroshikimate + H2O. It participates in aromatic compound metabolism; 3,4-dihydroxybenzoate biosynthesis; 3,4-dihydroxybenzoate from 3-dehydroquinate: step 1/2. Its function is as follows. Is involved in the catabolism of quinate. Allows the utilization of quinate as carbon source via the beta-ketoadipate pathway. This Scheffersomyces stipitis (strain ATCC 58785 / CBS 6054 / NBRC 10063 / NRRL Y-11545) (Yeast) protein is Catabolic 3-dehydroquinase.